Here is a 99-residue protein sequence, read N- to C-terminus: Nucleoid-associated protein SPN23F10240 (99 aa).

The protein belongs to the YbaB/EbfC family. In terms of assembly, homodimer.

It localises to the cytoplasm. Its subcellular location is the nucleoid. Its function is as follows. Binds to DNA and alters its conformation. May be involved in regulation of gene expression, nucleoid organization and DNA protection. The sequence is that of Nucleoid-associated protein SPN23F10240 from Streptococcus pneumoniae (strain ATCC 700669 / Spain 23F-1).